Here is a 505-residue protein sequence, read N- to C-terminus: 2,3-bisphosphoglycerate-independent phosphoglycerate mutase (505 aa).

Residues Asp-13 and Ser-63 each coordinate Mn(2+). The active-site Phosphoserine intermediate is Ser-63. Residues His-124, 153–154 (RD), Arg-183, Arg-189, 254–257 (RADR), and Lys-329 each bind substrate. Positions 395, 399, 436, 437, and 455 each coordinate Mn(2+).

The protein belongs to the BPG-independent phosphoglycerate mutase family. In terms of assembly, monomer. Requires Mn(2+) as cofactor.

The enzyme catalyses (2R)-2-phosphoglycerate = (2R)-3-phosphoglycerate. It functions in the pathway carbohydrate degradation; glycolysis; pyruvate from D-glyceraldehyde 3-phosphate: step 3/5. Catalyzes the interconversion of 2-phosphoglycerate and 3-phosphoglycerate. In Agrobacterium fabrum (strain C58 / ATCC 33970) (Agrobacterium tumefaciens (strain C58)), this protein is 2,3-bisphosphoglycerate-independent phosphoglycerate mutase.